A 178-amino-acid chain; its full sequence is DNA-directed RNA polymerase subunit beta (178 aa).

The protein belongs to the RNA polymerase beta chain family. In terms of assembly, the RNAP catalytic core consists of 2 alpha, 1 beta, 1 beta' and 1 omega subunit. When a sigma factor is associated with the core the holoenzyme is formed, which can initiate transcription.

The catalysed reaction is RNA(n) + a ribonucleoside 5'-triphosphate = RNA(n+1) + diphosphate. Its function is as follows. DNA-dependent RNA polymerase catalyzes the transcription of DNA into RNA using the four ribonucleoside triphosphates as substrates. The chain is DNA-directed RNA polymerase subunit beta (rpoB) from Liberibacter asiaticus (Citrus greening disease).